The sequence spans 456 residues: Exodeoxyribonuclease 7 large subunit (456 aa).

The protein belongs to the XseA family. As to quaternary structure, heterooligomer composed of large and small subunits.

It is found in the cytoplasm. It carries out the reaction Exonucleolytic cleavage in either 5'- to 3'- or 3'- to 5'-direction to yield nucleoside 5'-phosphates.. Its function is as follows. Bidirectionally degrades single-stranded DNA into large acid-insoluble oligonucleotides, which are then degraded further into small acid-soluble oligonucleotides. This chain is Exodeoxyribonuclease 7 large subunit, found in Azotobacter vinelandii (strain DJ / ATCC BAA-1303).